We begin with the raw amino-acid sequence, 289 residues long: Urease accessory protein UreD (289 aa).

This sequence belongs to the UreD family. In terms of assembly, ureD, UreF and UreG form a complex that acts as a GTP-hydrolysis-dependent molecular chaperone, activating the urease apoprotein by helping to assemble the nickel containing metallocenter of UreC. The UreE protein probably delivers the nickel.

Its subcellular location is the cytoplasm. In terms of biological role, required for maturation of urease via the functional incorporation of the urease nickel metallocenter. The protein is Urease accessory protein UreD of Cupriavidus pinatubonensis (strain JMP 134 / LMG 1197) (Cupriavidus necator (strain JMP 134)).